Consider the following 66-residue polypeptide: Conotoxin Cl14.1a (66 aa).

The signal sequence occupies residues 1-19 (MNVTAMFIVLLLTMPLTDG). The propeptide occupies 20–49 (FNIRAINGGELFGLVQRDAGNALDHGFYRR).

It belongs to the conotoxin L superfamily. Post-translationally, contains 2 disulfide bonds. Expressed by the venom duct.

The protein resides in the secreted. In terms of biological role, probable neurotoxin with unknown target. Possibly targets ion channels. This peptide could be considered as an apoptosis activator in some cancers (tested on lung and breast cancer cell lines). Provokes the decrease of H1299 lung cancer cells viability after 24 hours treatment, and induces a high Bax/Bcl-2 ratio, which suggests that this peptide can activate apoptosis in H1299 cells. In addition, H1299 and H1437 lung cancer cell lines treated with this peptide have decreased cell viability, activated caspases, and reduced expression of the pro-survival protein NF-kappa-B (NFKB1), indicating activation of apoptosis. In synergy with MicroRNA-101-3p, this synthetic peptide inhibits breast cancer cells (SK-BR-3 and MCF-7) migration, invasion, and proliferation through suppressing the expression of the methyltransferase EZH2. In parallel, this synergy treatment is able to promote the apoptosis of breast cancer cells. Against microbes, this synthetic toxin (at micromolar concentrations) lowers viability and inhibits host cell invasion by the opportunistic parasite Toxoplasma gondii (tachyzoite form). In addition, it permits T.gondii intracellular replication to decrease while viability of the host cell is unaffected. The polypeptide is Conotoxin Cl14.1a (Californiconus californicus (California cone)).